The primary structure comprises 369 residues: Leucine carboxyl methyltransferase 1 (369 aa).

Residues Arg-84, Gly-108, Asp-132, 187–188 (DL), and Glu-215 contribute to the S-adenosyl-L-methionine site.

It belongs to the methyltransferase superfamily. LCMT family.

It catalyses the reaction [phosphatase 2A protein]-C-terminal L-leucine + S-adenosyl-L-methionine = [phosphatase 2A protein]-C-terminal L-leucine methyl ester + S-adenosyl-L-homocysteine. Functionally, methylates the carboxyl group of the C-terminal leucine residue of protein phosphatase 2A catalytic subunits to form alpha-leucine ester residues. This chain is Leucine carboxyl methyltransferase 1 (PPM1), found in Debaryomyces hansenii (strain ATCC 36239 / CBS 767 / BCRC 21394 / JCM 1990 / NBRC 0083 / IGC 2968) (Yeast).